Here is a 461-residue protein sequence, read N- to C-terminus: Bifunctional protein GlmU (461 aa).

The segment at 1 to 232 (MNLQIIILAA…SFEVQGINNR (232 aa)) is pyrophosphorylase. Residues 8 to 11 (LAAG), Lys22, Gln73, and 78 to 79 (GT) contribute to the UDP-N-acetyl-alpha-D-glucosamine site. Asp102 contacts Mg(2+). UDP-N-acetyl-alpha-D-glucosamine contacts are provided by Gly142, Glu157, and Asn230. Asn230 contributes to the Mg(2+) binding site. The tract at residues 233–253 (QQLQQLERIWQQRAANQLMEK) is linker. Residues 254–461 (GVTLADANRF…WKRPAKRERD (208 aa)) form an N-acetyltransferase region. 2 residues coordinate UDP-N-acetyl-alpha-D-glucosamine: Arg336 and Lys354. The active-site Proton acceptor is His366. Tyr369 and Asn380 together coordinate UDP-N-acetyl-alpha-D-glucosamine. Acetyl-CoA-binding positions include Ala383, 389–390 (NY), Ser408, and Ala426.

In the N-terminal section; belongs to the N-acetylglucosamine-1-phosphate uridyltransferase family. It in the C-terminal section; belongs to the transferase hexapeptide repeat family. In terms of assembly, homotrimer. It depends on Mg(2+) as a cofactor.

The protein localises to the cytoplasm. It carries out the reaction alpha-D-glucosamine 1-phosphate + acetyl-CoA = N-acetyl-alpha-D-glucosamine 1-phosphate + CoA + H(+). It catalyses the reaction N-acetyl-alpha-D-glucosamine 1-phosphate + UTP + H(+) = UDP-N-acetyl-alpha-D-glucosamine + diphosphate. The protein operates within nucleotide-sugar biosynthesis; UDP-N-acetyl-alpha-D-glucosamine biosynthesis; N-acetyl-alpha-D-glucosamine 1-phosphate from alpha-D-glucosamine 6-phosphate (route II): step 2/2. Its pathway is nucleotide-sugar biosynthesis; UDP-N-acetyl-alpha-D-glucosamine biosynthesis; UDP-N-acetyl-alpha-D-glucosamine from N-acetyl-alpha-D-glucosamine 1-phosphate: step 1/1. It functions in the pathway bacterial outer membrane biogenesis; LPS lipid A biosynthesis. Its function is as follows. Catalyzes the last two sequential reactions in the de novo biosynthetic pathway for UDP-N-acetylglucosamine (UDP-GlcNAc). The C-terminal domain catalyzes the transfer of acetyl group from acetyl coenzyme A to glucosamine-1-phosphate (GlcN-1-P) to produce N-acetylglucosamine-1-phosphate (GlcNAc-1-P), which is converted into UDP-GlcNAc by the transfer of uridine 5-monophosphate (from uridine 5-triphosphate), a reaction catalyzed by the N-terminal domain. This chain is Bifunctional protein GlmU, found in Legionella pneumophila (strain Lens).